Reading from the N-terminus, the 502-residue chain is Maturase K (502 aa).

It belongs to the intron maturase 2 family. MatK subfamily.

It localises to the plastid. Its subcellular location is the chloroplast. Its function is as follows. Usually encoded in the trnK tRNA gene intron. Probably assists in splicing its own and other chloroplast group II introns. The chain is Maturase K from Brassica campestris (Field mustard).